The following is a 181-amino-acid chain: Protein GrpE (181 aa).

Over residues 1–12 the composition is skewed to polar residues; the sequence is MENTQENPTTPS. A disordered region spans residues 1 to 33; the sequence is MENTQENPTTPSAEDIGSEKQAAQGAAPAAEAA. The segment covering 21–33 has biased composition (low complexity); that stretch reads QAAQGAAPAAEAA.

The protein belongs to the GrpE family. As to quaternary structure, homodimer.

It localises to the cytoplasm. Functionally, participates actively in the response to hyperosmotic and heat shock by preventing the aggregation of stress-denatured proteins, in association with DnaK and GrpE. It is the nucleotide exchange factor for DnaK and may function as a thermosensor. Unfolded proteins bind initially to DnaJ; upon interaction with the DnaJ-bound protein, DnaK hydrolyzes its bound ATP, resulting in the formation of a stable complex. GrpE releases ADP from DnaK; ATP binding to DnaK triggers the release of the substrate protein, thus completing the reaction cycle. Several rounds of ATP-dependent interactions between DnaJ, DnaK and GrpE are required for fully efficient folding. The sequence is that of Protein GrpE from Burkholderia cenocepacia (strain HI2424).